We begin with the raw amino-acid sequence, 407 residues long: RING-H2 finger protein ATL43 (407 aa).

The first 22 residues, 1 to 22 (MSSSSLILLFSTLSLFLNVSLA), serve as a signal peptide directing secretion. The chain crosses the membrane as a helical span at residues 57–77 (GIAVVIAVLTAFFSLTFLLLL). The RING-type; atypical zinc finger occupies 146 to 188 (CAVCLARFEPTEVLRLLPKCKHAFHVECVDTWLDAHSTCPLCR).

This sequence belongs to the RING-type zinc finger family. ATL subfamily.

The protein localises to the membrane. The enzyme catalyses S-ubiquitinyl-[E2 ubiquitin-conjugating enzyme]-L-cysteine + [acceptor protein]-L-lysine = [E2 ubiquitin-conjugating enzyme]-L-cysteine + N(6)-ubiquitinyl-[acceptor protein]-L-lysine.. It functions in the pathway protein modification; protein ubiquitination. This chain is RING-H2 finger protein ATL43 (ATL43), found in Arabidopsis thaliana (Mouse-ear cress).